The following is a 120-amino-acid chain: MIVGIGIDIVELHRVAELMERQPKFIERILTDNEHIRFQQLSSKRKIEFVAGRFAAKEAYAKALGTGIGTHVSFHDIEIKNDENGKPYIISPSMDERVHVSISHSEHYAVAQVIIERLSS.

Mg(2+) contacts are provided by D8 and E58.

This sequence belongs to the P-Pant transferase superfamily. AcpS family. Mg(2+) serves as cofactor.

The protein resides in the cytoplasm. It catalyses the reaction apo-[ACP] + CoA = holo-[ACP] + adenosine 3',5'-bisphosphate + H(+). Functionally, transfers the 4'-phosphopantetheine moiety from coenzyme A to a Ser of acyl-carrier-protein. This is Holo-[acyl-carrier-protein] synthase from Anoxybacillus flavithermus (strain DSM 21510 / WK1).